A 310-amino-acid polypeptide reads, in one-letter code: Vomeronasal type-1 receptor 97 (310 aa).

Residues 1–19 (MNKDNILHTDTNIKITLFS) are Extracellular-facing. Residues 20 to 40 (EVSIGISANSALFFSHLFMLF) form a helical membrane-spanning segment. The Cytoplasmic segment spans residues 41 to 49 (EKNRSKPID). Residues 50-70 (LYIAFLSLTQLMLLITIGLIA) form a helical membrane-spanning segment. The Extracellular segment spans residues 71–93 (ADMFMSRGRWDSTTCQSLIYLHR). The cysteines at positions 85 and 172 are disulfide-linked. Residues 94-114 (LLRGFTLCATCLLNVLWTITL) traverse the membrane as a helical segment. The Cytoplasmic segment spans residues 115–131 (SPRSSCLTTFKHKSPHH). The chain crosses the membrane as a helical span at residues 132-152 (ISGAFLFFCVLYISFGSHLFL). At 153–190 (STIATPNLTSDNFMYVTQSCSFLPMSYSRTSMFSTPMA) the chain is on the extracellular side. Asn-159 carries an N-linked (GlcNAc...) asparagine glycan. The helical transmembrane segment at 191–211 (IREALLIGLIGLSSGYMVAFL) threads the bilayer. At 212 to 238 (WRHKNQARHLHSTSLSSKVSPEQRATR) the chain is on the cytoplasmic side. A helical membrane pass occupies residues 239 to 259 (TIMILMSFFVVLYILENVVFY). Topologically, residues 260–269 (SRMTFKDGSM) are extracellular. Residues 270 to 290 (FYCVQIIVSHSYATISPFVFI) form a helical membrane-spanning segment. At 291 to 310 (CTEKRIIKLWGSMSSRIVSI) the chain is on the cytoplasmic side.

This sequence belongs to the G-protein coupled receptor 1 family. As to expression, expressed in 1-4% of neurons of the vomeronasal organ. Only one pheromone receptor gene may be expressed in a particular neuron. Not expressed in the main olfactory epithelium.

Its subcellular location is the cell membrane. Its function is as follows. Putative pheromone receptor implicated in the regulation of social as well as reproductive behavior. In Rattus norvegicus (Rat), this protein is Vomeronasal type-1 receptor 97 (Vom1r97).